Consider the following 81-residue polypeptide: RBAK downstream neighbor protein (81 aa).

An N-terminal signal peptide occupies residues 1 to 22 (MWPPLLLLLLLLPAAPVPTAKA).

It is found in the secreted. The protein is RBAK downstream neighbor protein (RBAKDN) of Homo sapiens (Human).